A 180-amino-acid chain; its full sequence is Adenine phosphoribosyltransferase (180 aa).

It belongs to the purine/pyrimidine phosphoribosyltransferase family. As to quaternary structure, homodimer.

It is found in the cytoplasm. The catalysed reaction is AMP + diphosphate = 5-phospho-alpha-D-ribose 1-diphosphate + adenine. It participates in purine metabolism; AMP biosynthesis via salvage pathway; AMP from adenine: step 1/1. Functionally, catalyzes a salvage reaction resulting in the formation of AMP, that is energically less costly than de novo synthesis. This Haemophilus influenzae (strain PittEE) protein is Adenine phosphoribosyltransferase.